Here is a 130-residue protein sequence, read N- to C-terminus: Histone H2A type 1 (130 aa).

The interval 1-22 (MSGRGKQGGKTRAKAKTRSSRA) is disordered. N-acetylserine is present on Ser2. Ser2 is subject to Phosphoserine. Lys6 carries the N6-(2-hydroxyisobutyryl)lysine modification. Lys6 is subject to N6-acetyllysine. A compositionally biased stretch (basic residues) spans 7–19 (QGGKTRAKAKTRS). Lys10 carries the N6-(2-hydroxyisobutyryl)lysine; alternate modification. The residue at position 10 (Lys10) is an N6-lactoyllysine; alternate. Residue Lys10 is modified to N6-succinyllysine. Residues Lys14 and Lys16 each participate in a glycyl lysine isopeptide (Lys-Gly) (interchain with G-Cter in ubiquitin) cross-link. Residue Lys37 is modified to N6-(2-hydroxyisobutyryl)lysine; alternate. Residues Lys75 and Lys76 each carry the N6-(2-hydroxyisobutyryl)lysine modification. The residue at position 96 (Lys96) is an N6-(2-hydroxyisobutyryl)lysine; alternate. Lys96 carries the post-translational modification N6-succinyllysine. An N6-glutaryllysine; alternate modification is found at Lys96. At Gln105 the chain carries N5-methylglutamine. Lys119 carries the N6-(2-hydroxyisobutyryl)lysine; alternate modification. Residue Lys119 is modified to N6-glutaryllysine; alternate. A Glycyl lysine isopeptide (Lys-Gly) (interchain with G-Cter in ubiquitin) cross-link involves residue Lys120.

It belongs to the histone H2A family. In terms of assembly, the nucleosome is a histone octamer containing two molecules each of H2A, H2B, H3 and H4 assembled in one H3-H4 heterotetramer and two H2A-H2B heterodimers. The octamer wraps approximately 147 bp of DNA. Post-translationally, monoubiquitination of Lys-120 (H2AK119Ub) gives a specific tag for epigenetic transcriptional repression. Following DNA double-strand breaks (DSBs), it is ubiquitinated through 'Lys-63' linkage of ubiquitin moieties, leading to the recruitment of repair proteins to sites of DNA damage. H2AK119Ub and ionizing radiation-induced 'Lys-63'-linked ubiquitination are distinct events. Phosphorylation on Ser-2 is enhanced during mitosis. Phosphorylation on Ser-2 directly represses transcription. In terms of processing, glutamine methylation at Gln-105 (H2AQ104me) by FBL is specifically dedicated to polymerase I. It is present at 35S ribosomal DNA locus and impairs binding of the FACT complex.

It is found in the nucleus. The protein resides in the chromosome. In terms of biological role, core component of nucleosome. Nucleosomes wrap and compact DNA into chromatin, limiting DNA accessibility to the cellular machineries which require DNA as a template. Histones thereby play a central role in transcription regulation, DNA repair, DNA replication and chromosomal stability. DNA accessibility is regulated via a complex set of post-translational modifications of histones, also called histone code, and nucleosome remodeling. The sequence is that of Histone H2A type 1 from Xenopus laevis (African clawed frog).